The following is a 95-amino-acid chain: Aspartyl/glutamyl-tRNA(Asn/Gln) amidotransferase subunit C (95 aa).

The protein belongs to the GatC family. Heterotrimer of A, B and C subunits.

The catalysed reaction is L-glutamyl-tRNA(Gln) + L-glutamine + ATP + H2O = L-glutaminyl-tRNA(Gln) + L-glutamate + ADP + phosphate + H(+). It carries out the reaction L-aspartyl-tRNA(Asn) + L-glutamine + ATP + H2O = L-asparaginyl-tRNA(Asn) + L-glutamate + ADP + phosphate + 2 H(+). Functionally, allows the formation of correctly charged Asn-tRNA(Asn) or Gln-tRNA(Gln) through the transamidation of misacylated Asp-tRNA(Asn) or Glu-tRNA(Gln) in organisms which lack either or both of asparaginyl-tRNA or glutaminyl-tRNA synthetases. The reaction takes place in the presence of glutamine and ATP through an activated phospho-Asp-tRNA(Asn) or phospho-Glu-tRNA(Gln). This is Aspartyl/glutamyl-tRNA(Asn/Gln) amidotransferase subunit C from Caulobacter sp. (strain K31).